The following is a 199-amino-acid chain: 7-methyl-GTP pyrophosphatase (199 aa).

D76 acts as the Proton acceptor in catalysis.

It belongs to the Maf family. YceF subfamily. Requires a divalent metal cation as cofactor.

The protein localises to the cytoplasm. It catalyses the reaction N(7)-methyl-GTP + H2O = N(7)-methyl-GMP + diphosphate + H(+). Its function is as follows. Nucleoside triphosphate pyrophosphatase that hydrolyzes 7-methyl-GTP (m(7)GTP). May have a dual role in cell division arrest and in preventing the incorporation of modified nucleotides into cellular nucleic acids. This chain is 7-methyl-GTP pyrophosphatase, found in Nitrosococcus oceani (strain ATCC 19707 / BCRC 17464 / JCM 30415 / NCIMB 11848 / C-107).